We begin with the raw amino-acid sequence, 628 residues long: Monoterpene synthase like 1, chloroplastic (628 aa).

The Mg(2+) site is built by aspartate 379, aspartate 383, and aspartate 531. The DDXXD motif signature appears at 379 to 383 (DDIYD).

This sequence belongs to the terpene synthase family. Tpsd subfamily. Requires Mg(2+) as cofactor. Mn(2+) is required as a cofactor.

It is found in the plastid. The protein resides in the chloroplast. The protein operates within terpene metabolism; oleoresin biosynthesis. It functions in the pathway secondary metabolite biosynthesis; terpenoid biosynthesis. Monoterpene synthase (TPS) involved in the biosynthesis of monoterpene natural products included in conifer oleoresin secretions and volatile emissions; these compounds contribute to biotic and abiotic stress defense against herbivores and pathogens. This chain is Monoterpene synthase like 1, chloroplastic, found in Pinus banksiana (Jack pine).